Consider the following 223-residue polypeptide: Transmembrane protein 126 (223 aa).

Residues 1–39 (MALSRAKPDELPRDAVVITEDQALKYQWKIITSWDKIGE) lie on the Mitochondrial matrix side of the membrane. The chain crosses the membrane as a helical span at residues 40–62 (VWSLRYTPGILSALAAGTGAYIN). Topologically, residues 63-78 (NHYRTKLRLGGHGRLS) are mitochondrial intermembrane. The chain crosses the membrane as a helical span at residues 79–99 (TYLPIVAVPAIFTMLAHKFFI). The Mitochondrial matrix segment spans residues 100 to 123 (QRPILLNPLGECPVCIQMRSAAFQ). Residues 124–144 (TSLGIVYPTILAPFAAFLFAT) form a helical membrane-spanning segment. At 145-171 (RCYTYRIPSITENPREVFLLWRKFTRP) the chain is on the mitochondrial intermembrane side. A helical transmembrane segment spans residues 172–192 (IVPALGTLIGLQALLTMFLTG). The Mitochondrial matrix portion of the chain corresponds to 193-223 (QEDKQNFKLMLRMREIEHQVEEEHLPQRMDF).

This sequence belongs to the TMEM126 family. As to quaternary structure, associates with mitochondrial complex I assembly intermediates during its biogenesis.

Its subcellular location is the mitochondrion membrane. Its function is as follows. As part of the MCIA complex, involved in the assembly of the mitochondrial complex I. In Drosophila melanogaster (Fruit fly), this protein is Transmembrane protein 126.